A 189-amino-acid polypeptide reads, in one-letter code: Calcyphosin (189 aa).

4 consecutive EF-hand domains span residues 21–56, 57–92, 93–128, and 136–172; these read LGIQGLARFFRRLDRDRSRSLDSRELQRGLAELGLV, LDTAEAEGVCRRWDRDGSGTLDLEEFLRALRPPMSQ, AREAVIAAAFAKLDRSGDGVVTVDDLRGVYSGRTHP, and TEEEVLRRFLDNFDSSEKDGQVTLAEFQDYYSGVSAS. Ca(2+)-binding residues include Asp34, Asp36, Ser38, Ser40, Glu45, Asp70, Asp72, Ser74, Thr76, Glu81, Asp106, Ser108, Asp110, and Asp117. Ser40 is subject to Phosphoserine; by PKA.

As to quaternary structure, monomer. Does not form oligomers in the presence of calcium. Phosphorylated in response to thyrotropin and cAMP. As to expression, detected in thyroid, salivary gland, lung, brain and cerebellum (at protein level).

The protein localises to the cytoplasm. Functionally, calcium-binding protein. May play a role in cellular signaling events (Potential). This Canis lupus familiaris (Dog) protein is Calcyphosin (CAPS).